A 355-amino-acid polypeptide reads, in one-letter code: Protein MGF 360-10L (355 aa).

One copy of the ANK repeat lies at 57–89 (DLNTALMLATKENNYQLIKLFTEWGADINYGLI).

Belongs to the asfivirus MGF 360 family.

Functionally, plays a role in virus cell tropism, and may be required for efficient virus replication in macrophages. This is Protein MGF 360-10L from African swine fever virus (isolate Tick/Malawi/Lil 20-1/1983) (ASFV).